A 160-amino-acid chain; its full sequence is Deoxyuridine 5'-triphosphate nucleotidohydrolase (160 aa).

8 residues coordinate dUMP: Ser-80, Gly-93, Asp-96, Tyr-99, Lys-104, Arg-149, Phe-154, and Gly-155.

The protein belongs to the dUTPase family. Homotrimer. The cofactor is Mg(2+).

The catalysed reaction is dUTP + H2O = dUMP + diphosphate + H(+). Its pathway is pyrimidine metabolism; dUMP biosynthesis; dUMP from dCTP (dUTP route): step 2/2. In terms of biological role, involved in nucleotide metabolism via production of dUMP, the immediate precursor of thymidine nucleotides, and decreases the intracellular concentration of dUTP so that uracil cannot be incorporated into DNA. In Debaryomyces hansenii (strain ATCC 36239 / CBS 767 / BCRC 21394 / JCM 1990 / NBRC 0083 / IGC 2968) (Yeast), this protein is Deoxyuridine 5'-triphosphate nucleotidohydrolase (DUT1).